A 991-amino-acid polypeptide reads, in one-letter code: Receptor-like protein kinase HAIKU2 (991 aa).

The N-terminal stretch at 1-19 (MLRLLFIVRLLFLMPLASS) is a signal peptide. Topologically, residues 20-616 (RSNHSEEVEN…KRKHLSKVDM (597 aa)) are extracellular. N22 carries an N-linked (GlcNAc...) asparagine glycan. LRR repeat units follow at residues 66–90 (DGNVVEINLGSRSLINRDDDGRFTD), 99–123 (LKLLEKLVLGNNSLRGQIGTNLGKC), 125–148 (RLRYLDLGINNFSGEFPAIDSLQL), 150–170 (EFLSLNASGISGIFPWSSLKD), 171–196 (LKRLSFLSVGDNRFGSHPFPREILNL), 197–220 (TALQWVYLSNSSITGKIPEGIKNL), 221–244 (VRLQNLELSDNQISGEIPKEIVQL), 246–267 (NLRQLEIYSNDLTGKLPLGFRN), 269–291 (TNLRNFDASNNSLEGDLSELRFL), 292–314 (KNLVSLGMFENRLTGEIPKEFGD), 315–339 (FKSLAALSLYRNQLTGKLPRRLGSW), 341–363 (AFKYIDVSENFLEGQIPPYMCKK), 365–387 (VMTHLLMLQNRFTGQFPESYAKC), 388–411 (KTLIRLRVSNNSLSGMIPSGIWGL), 413–435 (NLQFLDLASNYFEGNLTGDIGNA), 436–459 (KSLGSLDLSNNRFSGSLPFQISGA), 461–482 (SLVSVNLRMNKFSGIVPESFGK), 483–508 (LKELSSLILDQNNLSGAIPKSLGLCT), 510–531 (LVDLNFAGNSLSEEIPESLGSL), 532–554 (KLLNSLNLSGNKLSGMIPVGLSA), and 555–578 (LKLSLLDLSNNQLTGSVPESLVSG). 5 N-linked (GlcNAc...) asparagine glycosylation sites follow: N109, N135, N155, N195, and N206. N-linked (GlcNAc...) asparagine glycans are attached at residues N267 and N278. N397 and N427 each carry an N-linked (GlcNAc...) asparagine glycan. The N-linked (GlcNAc...) asparagine glycan is linked to N495. An N-linked (GlcNAc...) asparagine glycan is attached at N538. Residues 617–637 (CFIVAAILALFFLFSYVIFKI) form a helical membrane-spanning segment. The Cytoplasmic segment spans residues 638–991 (RRDKLNKTVQ…SANDEITKVV (354 aa)). One can recognise a Protein kinase domain in the interval 671–970 (IKSENIIGRG…SMLEKIEPSY (300 aa)). Residues 677–685 (IGRGGQGNV) and K699 each bind ATP. Residues Y762 and Y801 each carry the phosphotyrosine modification. D814 functions as the Proton acceptor in the catalytic mechanism. A phosphotyrosine mark is found at Y859 and Y866. The residue at position 867 (T867) is a Phosphothreonine. Residues 972–991 (KNSGEASYGESANDEITKVV) form a disordered region.

It belongs to the protein kinase superfamily. Ser/Thr protein kinase family. Expressed in the endosperm of fertilized ovules.

The protein localises to the membrane. It carries out the reaction L-seryl-[protein] + ATP = O-phospho-L-seryl-[protein] + ADP + H(+). The catalysed reaction is L-threonyl-[protein] + ATP = O-phospho-L-threonyl-[protein] + ADP + H(+). Functionally, modulates the seed size by negatively regulating the cellularization of syncytial endosperm. This Arabidopsis thaliana (Mouse-ear cress) protein is Receptor-like protein kinase HAIKU2 (IKU2).